We begin with the raw amino-acid sequence, 263 residues long: 3'-5' ssDNA/RNA exonuclease TatD (263 aa).

A divalent metal cation is bound by residues E91, H127, and H152.

It belongs to the metallo-dependent hydrolases superfamily. TatD-type hydrolase family. TatD subfamily. Monomer. It depends on Mg(2+) as a cofactor.

Its subcellular location is the cytoplasm. Functionally, 3'-5' exonuclease that prefers single-stranded DNA and RNA. May play a role in the H(2)O(2)-induced DNA damage repair. The sequence is that of 3'-5' ssDNA/RNA exonuclease TatD from Citrobacter rodentium (strain ICC168) (Citrobacter freundii biotype 4280).